Reading from the N-terminus, the 411-residue chain is Protein BTN1 (411 aa).

The first 29 residues, 1 to 29 (MNSKQRVYAFFWIFGLVNNVLYVVILSAA), serve as a signal peptide directing secretion. The next 8 helical transmembrane spans lie at 41–61 (LVLL…PFFI), 79–99 (IGMI…IAMA), 127–147 (SGTG…TSIF), 149–169 (LPIR…LLYF), 281–300 (YVTY…SLAH), 307–329 (LYFL…WIYI), 334–356 (WPIM…NTFL), and 371–391 (LGAV…VGLG).

The protein belongs to the battenin family.

The protein localises to the vacuole membrane. Functionally, involved in vacuolar transport and vacuole pH homeostasis. Also required for cytokinesis. In Candida glabrata (strain ATCC 2001 / BCRC 20586 / JCM 3761 / NBRC 0622 / NRRL Y-65 / CBS 138) (Yeast), this protein is Protein BTN1 (BTN1).